The sequence spans 382 residues: Cell division protein FtsZ (382 aa).

GTP contacts are provided by residues 21-25, 108-110, Glu-139, Arg-143, and Asp-187; these read GGGNN and GTG. The disordered stretch occupies residues 320–382; it reads KDVTKPQRPS…TFLRNRNKRG (63 aa). The segment covering 326 to 341 has biased composition (polar residues); it reads QRPSLNQSIKTHNQSV. Residues 342–351 are compositionally biased toward basic and acidic residues; that stretch reads PKREPKREEP. Polar residues predominate over residues 352 to 365; the sequence is QQQNTVSRHTSQPA.

This sequence belongs to the FtsZ family. As to quaternary structure, homodimer. Polymerizes to form a dynamic ring structure in a strictly GTP-dependent manner. Interacts directly with several other division proteins. Interacts with FtsA. Interacts with Phi29 DNA replication protein 1. Interacts with the cell division inhibitor MciZ.

The protein localises to the cytoplasm. During sporulation, is negatively regulated by MciZ, which binds to FtsZ and inhibits its polymerization and the formation of the Z ring. Functionally, essential cell division protein that forms a contractile ring structure (Z ring) at the future cell division site. The regulation of the ring assembly controls the timing and the location of cell division. One of the functions of the FtsZ ring is to recruit other cell division proteins to the septum to produce a new cell wall between the dividing cells. Binds GTP and shows GTPase activity. This chain is Cell division protein FtsZ, found in Bacillus subtilis (strain 168).